Reading from the N-terminus, the 460-residue chain is Cysteine--tRNA ligase (460 aa).

A Zn(2+)-binding site is contributed by Cys28. The 'HIGH' region motif lies at 30-40 (MTVYDYCHLGH). Residues Cys209, His234, and Glu238 each contribute to the Zn(2+) site. The 'KMSKS' region signature appears at 266-270 (KMSKS). Lys269 serves as a coordination point for ATP.

This sequence belongs to the class-I aminoacyl-tRNA synthetase family. As to quaternary structure, monomer. Zn(2+) is required as a cofactor.

Its subcellular location is the cytoplasm. It carries out the reaction tRNA(Cys) + L-cysteine + ATP = L-cysteinyl-tRNA(Cys) + AMP + diphosphate. The sequence is that of Cysteine--tRNA ligase from Pseudomonas putida (strain W619).